The primary structure comprises 148 residues: Large ribosomal subunit protein uL13 (148 aa).

Belongs to the universal ribosomal protein uL13 family. As to quaternary structure, part of the 50S ribosomal subunit.

Functionally, this protein is one of the early assembly proteins of the 50S ribosomal subunit, although it is not seen to bind rRNA by itself. It is important during the early stages of 50S assembly. The chain is Large ribosomal subunit protein uL13 from Ureaplasma urealyticum serovar 10 (strain ATCC 33699 / Western).